A 169-amino-acid chain; its full sequence is Der GTPase-activating protein YihI (169 aa).

Disordered regions lie at residues 1–75 and 144–169; these read MKPS…IPLG and GLSY…LRGN. The segment covering 10–19 has biased composition (basic residues); that stretch reads SKGHAKARRK. Over residues 20-30 the composition is skewed to basic and acidic residues; sequence TREELDQEARD. Basic residues predominate over residues 31–40; sequence RKRQKKRRGH. Over residues 49 to 58 the composition is skewed to polar residues; sequence GNTTSGSKGQ. The segment covering 147–159 has biased composition (acidic residues); sequence YDDDEEEEEDEKQ. Residues 160–169 show a composition bias toward basic and acidic residues; the sequence is EDMMRLLRGN.

Belongs to the YihI family. In terms of assembly, interacts with Der.

Its function is as follows. A GTPase-activating protein (GAP) that modifies Der/EngA GTPase function. May play a role in ribosome biogenesis. The chain is Der GTPase-activating protein YihI from Escherichia coli (strain 55989 / EAEC).